A 157-amino-acid polypeptide reads, in one-letter code: Protein Smg (157 aa).

Belongs to the Smg family.

The sequence is that of Protein Smg from Serratia proteamaculans (strain 568).